The following is a 229-amino-acid chain: tRNA pseudouridine synthase B (229 aa).

D52 acts as the Nucleophile in catalysis.

The protein belongs to the pseudouridine synthase TruB family. Type 1 subfamily.

It carries out the reaction uridine(55) in tRNA = pseudouridine(55) in tRNA. Its function is as follows. Responsible for synthesis of pseudouridine from uracil-55 in the psi GC loop of transfer RNAs. This Flavobacterium johnsoniae (strain ATCC 17061 / DSM 2064 / JCM 8514 / BCRC 14874 / CCUG 350202 / NBRC 14942 / NCIMB 11054 / UW101) (Cytophaga johnsonae) protein is tRNA pseudouridine synthase B.